We begin with the raw amino-acid sequence, 539 residues long: uncharacterized protein (539 aa).

The protein belongs to the transposase 25 family.

This is an uncharacterized protein from Sinorhizobium fredii (strain NBRC 101917 / NGR234).